The sequence spans 1289 residues: SH3 domain and tetratricopeptide repeat-containing protein 2 (1289 aa).

SH3 domains are found at residues 176 to 239 and 267 to 330; these read EGHF…PLPV and IGRG…LDSC. A disordered region spans residues 393–442; sequence SQPEGFREARSGGTWMERQTIGSRRSSGSGDSSPEEDELISASSDSYHLP. Residues 414–424 show a composition bias toward low complexity; sequence GSRRSSGSGDS. 8 TPR repeats span residues 529 to 562, 758 to 791, 837 to 870, 1002 to 1038, 1085 to 1119, 1120 to 1153, 1167 to 1200, and 1211 to 1245; these read ARLC…LDGA, RTLC…GKLL, GVVH…AREM, GQLL…FVDL, LKLY…LARR, MKAL…ATLA, LVAF…CPPW, and AKVY…AVLM.

This is SH3 domain and tetratricopeptide repeat-containing protein 2 (Sh3tc2) from Mus musculus (Mouse).